A 236-amino-acid chain; its full sequence is Kinetochore protein Spc25 (236 aa).

Residues 44 to 106 (KNIISAKEAI…DMEAQLLRHT (63 aa)) are a coiled coil. The tract at residues 194–217 (EVAGASPVTPSGSERPKATSKHSN) is disordered.

This sequence belongs to the SPC25 family. As to quaternary structure, component of the Ndc80 complex, which is composed of Ndc80, Nuf2 and Spc25.

The protein resides in the nucleus. Its subcellular location is the chromosome. It localises to the centromere. The protein localises to the kinetochore. Functionally, acts as a component of the essential kinetochore-associated Ndc80 complex, which is required for chromosome segregation and spindle checkpoint activity during meiosis and mitosis. Required for kinetochore integrity and the organization of stable microtubule binding sites in the outer plate of the kinetochore. Participates in SAC signaling that responds specifically to disruptions in spindle microtubule dynamics. The NDC80 complex synergistically enhances the affinity of the SKA1 complex for microtubules and may allow the NDC80 complex to track depolymerizing microtubules. The sequence is that of Kinetochore protein Spc25 from Drosophila persimilis (Fruit fly).